The sequence spans 200 residues: Small ribosomal subunit protein uS4 (200 aa).

The 64-residue stretch at 92–155 (SRLDAVVYSL…QNLDIIKESV (64 aa)) folds into the S4 RNA-binding domain.

Belongs to the universal ribosomal protein uS4 family. Part of the 30S ribosomal subunit. Contacts protein S5. The interaction surface between S4 and S5 is involved in control of translational fidelity.

Its function is as follows. One of the primary rRNA binding proteins, it binds directly to 16S rRNA where it nucleates assembly of the body of the 30S subunit. Functionally, with S5 and S12 plays an important role in translational accuracy. The protein is Small ribosomal subunit protein uS4 of Staphylococcus haemolyticus (strain JCSC1435).